Consider the following 199-residue polypeptide: NADH-quinone oxidoreductase subunit I (199 aa).

4Fe-4S ferredoxin-type domains follow at residues 45–75 (LNRH…VEGA) and 91–120 (RVYQ…MSNE). 8 residues coordinate [4Fe-4S] cluster: Cys55, Cys58, Cys61, Cys65, Cys100, Cys103, Cys106, and Cys110. The segment at 164 to 199 (GTPAAHMLSGEDDAASETTLDRSDDHSATYEEAERP) is disordered. Residues 182 to 199 (TLDRSDDHSATYEEAERP) are compositionally biased toward basic and acidic residues.

It belongs to the complex I 23 kDa subunit family. NDH-1 is composed of 14 different subunits. Subunits NuoA, H, J, K, L, M, N constitute the membrane sector of the complex. [4Fe-4S] cluster serves as cofactor.

It localises to the cell membrane. It catalyses the reaction a quinone + NADH + 5 H(+)(in) = a quinol + NAD(+) + 4 H(+)(out). Functionally, NDH-1 shuttles electrons from NADH, via FMN and iron-sulfur (Fe-S) centers, to quinones in the respiratory chain. The immediate electron acceptor for the enzyme in this species is believed to be ubiquinone. Couples the redox reaction to proton translocation (for every two electrons transferred, four hydrogen ions are translocated across the cytoplasmic membrane), and thus conserves the redox energy in a proton gradient. The protein is NADH-quinone oxidoreductase subunit I of Acidothermus cellulolyticus (strain ATCC 43068 / DSM 8971 / 11B).